Consider the following 535-residue polypeptide: uncharacterized protein (535 aa).

Transmembrane regions (helical) follow at residues 63–83 (LTGIVVALLVVTFAFPVPSIY), 90–110 (VTFGVAPAYATLALAIGTYWI), 143–163 (VAAVHLILWDIGGALLATLYG), 168–188 (VFVTIILFSVTICGVLVATNC), 226–246 (SLGSGVPVTGIATTALYVLLV), and 258–278 (VLILSITTLIFGFLVMWILAW). An HAMP domain is found at 279 to 330 (LTAAPVRVVRAALKRVEQGDLRGDLVVFDGTELGELQRGFNAMVNGLRERER). Residues 362 to 486 (AVVFVDIVGS…KPVNQAARLC (125 aa)) form the Guanylate cyclase domain.

Belongs to the adenylyl cyclase class-3 family.

The protein resides in the cell membrane. This is an uncharacterized protein from Mycobacterium tuberculosis (strain ATCC 25618 / H37Rv).